Consider the following 466-residue polypeptide: Asparagine--tRNA ligase (466 aa).

Belongs to the class-II aminoacyl-tRNA synthetase family. Homodimer.

It localises to the cytoplasm. It catalyses the reaction tRNA(Asn) + L-asparagine + ATP = L-asparaginyl-tRNA(Asn) + AMP + diphosphate + H(+). The protein is Asparagine--tRNA ligase of Vibrio vulnificus (strain YJ016).